The sequence spans 2036 residues: Transmembrane channel-like protein (2036 aa).

Disordered regions lie at residues 1–178 (MQND…IDDE) and 194–243 (SVRG…ESTQ). The Cytoplasmic segment spans residues 1 to 353 (MQNDEEPAAA…GVASYFTFLR (353 aa)). Over residues 58 to 73 (VGSSSSNGNTSNVATG) the composition is skewed to low complexity. The span at 74–90 (ANSENNSGVTSPHQLSV) shows a compositional bias: polar residues. A compositionally biased stretch (basic and acidic residues) spans 125-134 (ASQEDHRSYE). The segment covering 166–178 (FDEDGGGGDIDDE) has biased composition (acidic residues). Over residues 198–208 (YRGKRGSRSSR) the composition is skewed to basic residues. Residues 216 to 225 (HVLDSVERRR) are compositionally biased toward basic and acidic residues. The span at 227-243 (SVYTTSSEEGTNQESTQ) shows a compositional bias: polar residues. A helical membrane pass occupies residues 354–374 (WLMWVNIMIAIPLVAFVIGPE). Residues 375-395 (YFATKHGETDPRKRMSDPEAR) are Extracellular-facing. A helical transmembrane segment spans residues 396–418 (VAGNLFTFWEFEGYLKYSPMFYG). Over 419-432 (YYSSTSGISTSGYK) the chain is Cytoplasmic. Residues 433–453 (LPLAYFLTAVLVYIYSFVATL) traverse the membrane as a helical segment. Residues 454–526 (RKMAENSRNS…NRNWRVILQR (73 aa)) are Extracellular-facing. The helical transmembrane segment at 527–547 (ILVNILVMGLLGLSGATVVLL) threads the bilayer. Topologically, residues 548-567 (VNHSEDLAKHDNWLSRNAVN) are cytoplasmic. Residues 568 to 588 (VTMTLLSFFLPMIFEALGLFE) form a helical membrane-spanning segment. At 589 to 599 (NWHPRQQLRLQ) the chain is on the extracellular side. A helical transmembrane segment spans residues 600–620 (LARIMILNMLNLYSLMFSFIY). The Cytoplasmic portion of the chain corresponds to 621 to 1308 (KINSKEKPLQ…ILTLINNQGQ (688 aa)). Disordered stretches follow at residues 789–839 (TTAT…TEAT), 860–967 (KPLG…TDQA), 996–1027 (FFTS…NATP), 1066–1143 (LRGR…EGSE), and 1186–1205 (GSTT…KQLT). Over residues 870-885 (IPNSTTNSATLSTIPA) the composition is skewed to polar residues. Over residues 886-906 (TLNTTNLPLNSTTKLTTTTST) the composition is skewed to low complexity. Polar residues predominate over residues 933–952 (TSDAPDNNSYSDITDYSSEP). The span at 953-967 (SEIEDFDEQESTDQA) shows a compositional bias: acidic residues. Low complexity-rich tracts occupy residues 1069-1083 (RITT…STTT), 1091-1100 (RTTTTELTST), and 1107-1130 (TTES…SSST). The chain crosses the membrane as a helical span at residues 1309–1329 (VWMGIFFSPGLVLINLVKLMI). Residues 1330–1358 (MMYFRSWIVLTCNVPHEVVFKASKSNNFY) are Extracellular-facing. The chain crosses the membrane as a helical span at residues 1359–1379 (LSLLLTMLFLCVLPVGYAIVW). Residues 1380–1423 (LRPSWHCGPFSEYNRIAEFITNTTRNALPKQLHEPLDYLTSSST) are Cytoplasmic-facing. A helical transmembrane segment spans residues 1424-1444 (VIPLLLLLILIIYYLVSLTGA). At 1445 to 2036 (LREANQDLRT…RIDIENEHEK (592 aa)) the chain is on the extracellular side. Disordered stretches follow at residues 1527–1572 (LRKG…SRLQ), 1592–1841 (ERAR…SRQG), and 1859–1990 (KKDD…IPTI). Composition is skewed to basic and acidic residues over residues 1538–1566 (SFVR…DKRF), 1614–1640 (KETH…DKKD), 1658–1668 (SPKDNEHDPDT), 1727–1743 (HIVD…EDKP), and 1777–1793 (PEPE…ERSS). Over residues 1806–1838 (NEPSGTEEQDRSLPSPTPSQGQGHHQRQLSVLS) the composition is skewed to polar residues. Positions 1890 to 1899 (VLSSVSSSTA) are enriched in low complexity. Pro residues predominate over residues 1903–1914 (PPTPEPESPTPS). Residues 1976–1990 (QDSQSSIWSDNIPTI) show a composition bias toward polar residues.

Belongs to the TMC family. In terms of tissue distribution, expressed in multi-dendritic neurons of the labellum (md-L), which extend elaborate dendritic arbors innervating the bases of taste hairs (at protein level). In larvae, expressed in class I and class II dendritic arborization (da) neurons and bipolar dendrite (bd) neurons (at protein level). In adults, expressed in various sensory neurons including those in the mouth parts, olfactory neurons in the antenna, wing bristle neurons, haltere neurons, arista neurons, and many other sensory neurons, including a subset of chordotonal (Cho) neurons. Expressed in md-L axon terminals, including those that project into the subesophageal zone (SEZ). Also expressed in a small number of local neurons in the adult ventral nerve cord (VNC), and projections extending from a few neurons in the legs or wing hinges. In the adult mouth, expressed in a few multi-dendritic neurons of the ventral cibarial sensory organ (VCSO); the multiple elaborate dendritic branches form a brush-like structure that faces the luminal side of the food-passing tunnel. Also expressed in the oviduct and uterus of adult females.

It is found in the cell membrane. The protein localises to the cell projection. Its subcellular location is the dendrite. Its function is as follows. Probable ion channel. Component of mechanosensitive neurons that participates in proprioception, sensing food texture, and directing egg-laying site selection (oviposition). Component of multi-dendritic neurons of the labellum (md-L) where it is required for sensing the hardness and viscosity of their food, enabling them to behaviorally discriminate their preferred softness and smoothness from harder and stickier food options. Required as part of oviposition site selection process to relay mechanosensory and chemosensory information on the hardness and sweetness of potential egg-laying substrates, thus ensuring females select the most optimal site for their eggs survival. Females determine the softest substrate for their eggs first by making a coarse evaluation of substrate hardness using mechanosensitive channels nan and Piezo in the leg tarsal bristles, followed by a much finer assessment using nan, iav and Tmc mechanosensitive channels on the labellum. This protein is required to sense subtle differences in substrate stiffness (between 0.25% and 0.3% agarose), likely acting in the md-L neurons. Also required in neurons on the labellum, including the md-Ls, and possibly in the brain, to inhibit discrimination of egg-laying substrates of different hardness if the substrate contains sucrose. During oviposition evaluation, activation of sweet neurons by sucrose enhances the activity of the Tmc neurons resulting in females losing their softness preference in favor of egg-laying sites that contain sucrose. Acts in the larvae peripheral sensory neurons, to contribute to proprioception and sensory feedback for normal forward crawling behavior. Required for the normal activity of the proprioceptive sensory dendrites, ddaE which show preferential responses to forward locomotion, and ddaD which show preferential responses to backward locomotion. This chain is Transmembrane channel-like protein, found in Drosophila melanogaster (Fruit fly).